The primary structure comprises 351 residues: Peptide chain release factor 1 (351 aa).

An N5-methylglutamine modification is found at Q229.

Belongs to the prokaryotic/mitochondrial release factor family. Post-translationally, methylated by PrmC. Methylation increases the termination efficiency of RF1.

Its subcellular location is the cytoplasm. Functionally, peptide chain release factor 1 directs the termination of translation in response to the peptide chain termination codons UAG and UAA. The polypeptide is Peptide chain release factor 1 (Cereibacter sphaeroides (strain KD131 / KCTC 12085) (Rhodobacter sphaeroides)).